The following is a 211-amino-acid chain: Thiamine-phosphate synthase (211 aa).

4-amino-2-methyl-5-(diphosphooxymethyl)pyrimidine contacts are provided by residues 38 to 42 (QLREK) and Asn-70. Mg(2+)-binding residues include Asp-71 and Asp-90. Ser-109 lines the 4-amino-2-methyl-5-(diphosphooxymethyl)pyrimidine pocket. 135–137 (TST) lines the 2-[(2R,5Z)-2-carboxy-4-methylthiazol-5(2H)-ylidene]ethyl phosphate pocket. Lys-138 provides a ligand contact to 4-amino-2-methyl-5-(diphosphooxymethyl)pyrimidine. Residues Gly-165 and 185–186 (IS) each bind 2-[(2R,5Z)-2-carboxy-4-methylthiazol-5(2H)-ylidene]ethyl phosphate.

This sequence belongs to the thiamine-phosphate synthase family. The cofactor is Mg(2+).

It carries out the reaction 2-[(2R,5Z)-2-carboxy-4-methylthiazol-5(2H)-ylidene]ethyl phosphate + 4-amino-2-methyl-5-(diphosphooxymethyl)pyrimidine + 2 H(+) = thiamine phosphate + CO2 + diphosphate. The enzyme catalyses 2-(2-carboxy-4-methylthiazol-5-yl)ethyl phosphate + 4-amino-2-methyl-5-(diphosphooxymethyl)pyrimidine + 2 H(+) = thiamine phosphate + CO2 + diphosphate. The catalysed reaction is 4-methyl-5-(2-phosphooxyethyl)-thiazole + 4-amino-2-methyl-5-(diphosphooxymethyl)pyrimidine + H(+) = thiamine phosphate + diphosphate. The protein operates within cofactor biosynthesis; thiamine diphosphate biosynthesis; thiamine phosphate from 4-amino-2-methyl-5-diphosphomethylpyrimidine and 4-methyl-5-(2-phosphoethyl)-thiazole: step 1/1. Condenses 4-methyl-5-(beta-hydroxyethyl)thiazole monophosphate (THZ-P) and 2-methyl-4-amino-5-hydroxymethyl pyrimidine pyrophosphate (HMP-PP) to form thiamine monophosphate (TMP). The polypeptide is Thiamine-phosphate synthase (Clostridium acetobutylicum (strain ATCC 824 / DSM 792 / JCM 1419 / IAM 19013 / LMG 5710 / NBRC 13948 / NRRL B-527 / VKM B-1787 / 2291 / W)).